A 315-amino-acid chain; its full sequence is Secreted frizzled-related protein 3 (315 aa).

The N-terminal stretch at 1–21 (MWRGLPALALAALLLLGRAPA) is a signal peptide. Residues 22 to 142 (GRAAACEPVR…LYDRGVCISP (121 aa)) form the FZ domain. 5 cysteine pairs are disulfide-bonded: Cys-27–Cys-88, Cys-35–Cys-81, Cys-72–Cys-111, Cys-100–Cys-139, and Cys-104–Cys-128. N-linked (GlcNAc...) asparagine glycosylation occurs at Asn-41. Positions 170-290 (CKCKPIKATQ…WDQKLRHLGK (121 aa)) constitute an NTR domain. A disordered region spans residues 284–315 (KLRHLGKGKGEPGQSDSALKTGKPGNARQTRS).

The protein belongs to the secreted frizzled-related protein (sFRP) family.

The protein localises to the secreted. Soluble frizzled-related proteins (sFRPS) function as modulators of Wnt signaling through direct interaction with Wnts. They have a role in regulating cell growth and differentiation in specific cell types. SFRP3/FRZB appears to be involved in limb skeletogenesis. Antagonist of Wnt8 signaling. Regulates chondrocyte maturation and long bone development. The protein is Secreted frizzled-related protein 3 (FRZB) of Gallus gallus (Chicken).